The primary structure comprises 349 residues: Anthranilate phosphoribosyltransferase (349 aa).

5-phospho-alpha-D-ribose 1-diphosphate is bound by residues G82, 85–86 (GD), T90, 92–95 (NVST), 110–118 (KHGNRSVSS), and G122. G82 serves as a coordination point for anthranilate. S94 lines the Mg(2+) pocket. N113 serves as a coordination point for anthranilate. R168 lines the anthranilate pocket. D232 and E233 together coordinate Mg(2+).

This sequence belongs to the anthranilate phosphoribosyltransferase family. Homodimer. Requires Mg(2+) as cofactor.

It carries out the reaction N-(5-phospho-beta-D-ribosyl)anthranilate + diphosphate = 5-phospho-alpha-D-ribose 1-diphosphate + anthranilate. Its pathway is amino-acid biosynthesis; L-tryptophan biosynthesis; L-tryptophan from chorismate: step 2/5. Functionally, catalyzes the transfer of the phosphoribosyl group of 5-phosphorylribose-1-pyrophosphate (PRPP) to anthranilate to yield N-(5'-phosphoribosyl)-anthranilate (PRA). The polypeptide is Anthranilate phosphoribosyltransferase (Methanosphaera stadtmanae (strain ATCC 43021 / DSM 3091 / JCM 11832 / MCB-3)).